A 600-amino-acid chain; its full sequence is Oligopeptide-binding protein OppA (600 aa).

A signal peptide spans 1 to 22; that stretch reads MNKLKVTLLASSVVLAATLLSA. Cys-23 is lipidated: N-palmitoyl cysteine. A lipid anchor (S-diacylglycerol cysteine) is attached at Cys-23.

It belongs to the bacterial solute-binding protein 5 family. In terms of assembly, the complex is composed of two ATP-binding proteins (OppD and OppF), two transmembrane proteins (OppB and OppC) and a solute-binding protein (OppA).

It localises to the cell membrane. Functionally, part of the ABC transporter complex OppABCDF involved in the uptake of oligopeptides. The chain is Oligopeptide-binding protein OppA from Lactococcus lactis subsp. cremoris (strain SK11).